We begin with the raw amino-acid sequence, 304 residues long: Dipeptide transport system permease protein DppC (304 aa).

Residues 1-24 (MKTEHAKPLMTPEPNSPPPEDQYT) are disordered. A run of 6 helical transmembrane segments spans residues 41–61 (LAIV…FAPL), 108–128 (VGFF…LIAG), 141–161 (IFDI…VAIL), 164–184 (SLQN…GRLV), 227–247 (ATLG…LGLG), and 271–291 (WTVL…NMIG). Residues 102-291 (ARLSLQVGFF…LVVLGFNMIG (190 aa)) enclose the ABC transmembrane type-1 domain.

It belongs to the binding-protein-dependent transport system permease family. OppBC subfamily.

The protein resides in the cell membrane. Probably part of the ABC transporter Dpp involved in dipeptide transport. Responsible for the translocation of the substrate across the membrane. The protein is Dipeptide transport system permease protein DppC (dppC) of Alkalihalophilus pseudofirmus (strain ATCC BAA-2126 / JCM 17055 / OF4) (Bacillus pseudofirmus).